The sequence spans 318 residues: Large ribosomal subunit protein uL10 (318 aa).

Residue tyrosine 24 is modified to Phosphotyrosine. The residue at position 59 (threonine 59) is a Phosphothreonine. A Glycyl lysine isopeptide (Lys-Gly) (interchain with G-Cter in ubiquitin) cross-link involves residue lysine 264. A Glycyl lysine isopeptide (Lys-Gly) (interchain with G-Cter in SUMO1); alternate cross-link involves residue lysine 298. Residue lysine 298 forms a Glycyl lysine isopeptide (Lys-Gly) (interchain with G-Cter in SUMO2); alternate linkage. The disordered stretch occupies residues lysine 298–aspartate 318. Over residues glutamate 303–methionine 312 the composition is skewed to acidic residues. Phosphoserine is present on residues serine 305 and serine 308.

The protein belongs to the universal ribosomal protein uL10 family. P0 forms a pentameric complex by interaction with dimers of P1 and P2. Identified in a IGF2BP1-dependent mRNP granule complex containing untranslated mRNAs. Interacts with APEX1. Interacts with FMR1 isoform 6. Ubiquitinated at Lys-264 by RNF14 and RNF25 in response to ribosome collisions (ribosome stalling).

It localises to the nucleus. The protein localises to the cytoplasm. Ribosomal protein P0 is the functional equivalent of E.coli protein L10. This is Large ribosomal subunit protein uL10 (RPLP0) from Oryctolagus cuniculus (Rabbit).